The following is a 673-amino-acid chain: DNA ligase (673 aa).

NAD(+) is bound at residue 34–38 (DAAFD). The disordered stretch occupies residues 54-73 (LRRPDSPTQRVGGATAPDFA). Residues 83 to 84 (SL) and E114 each bind NAD(+). Catalysis depends on K116, which acts as the N6-AMP-lysine intermediate. The NAD(+) site is built by R137, E176, K292, and K316. 4 residues coordinate Zn(2+): C410, C413, C428, and C433. Positions 594–673 (PAEGPLAGMT…DEFCERYLQG (80 aa)) constitute a BRCT domain.

Belongs to the NAD-dependent DNA ligase family. LigA subfamily. It depends on Mg(2+) as a cofactor. Mn(2+) is required as a cofactor.

The catalysed reaction is NAD(+) + (deoxyribonucleotide)n-3'-hydroxyl + 5'-phospho-(deoxyribonucleotide)m = (deoxyribonucleotide)n+m + AMP + beta-nicotinamide D-nucleotide.. Functionally, DNA ligase that catalyzes the formation of phosphodiester linkages between 5'-phosphoryl and 3'-hydroxyl groups in double-stranded DNA using NAD as a coenzyme and as the energy source for the reaction. It is essential for DNA replication and repair of damaged DNA. This chain is DNA ligase, found in Symbiobacterium thermophilum (strain DSM 24528 / JCM 14929 / IAM 14863 / T).